Consider the following 581-residue polypeptide: Proline--tRNA ligase (581 aa).

This sequence belongs to the class-II aminoacyl-tRNA synthetase family. ProS type 1 subfamily. As to quaternary structure, homodimer.

The protein localises to the cytoplasm. It carries out the reaction tRNA(Pro) + L-proline + ATP = L-prolyl-tRNA(Pro) + AMP + diphosphate. Functionally, catalyzes the attachment of proline to tRNA(Pro) in a two-step reaction: proline is first activated by ATP to form Pro-AMP and then transferred to the acceptor end of tRNA(Pro). As ProRS can inadvertently accommodate and process non-cognate amino acids such as alanine and cysteine, to avoid such errors it has two additional distinct editing activities against alanine. One activity is designated as 'pretransfer' editing and involves the tRNA(Pro)-independent hydrolysis of activated Ala-AMP. The other activity is designated 'posttransfer' editing and involves deacylation of mischarged Ala-tRNA(Pro). The misacylated Cys-tRNA(Pro) is not edited by ProRS. The protein is Proline--tRNA ligase of Rhodococcus erythropolis (strain PR4 / NBRC 100887).